Consider the following 215-residue polypeptide: Large ribosomal subunit protein uL3 (215 aa).

At Gln-156 the chain carries N5-methylglutamine.

It belongs to the universal ribosomal protein uL3 family. Part of the 50S ribosomal subunit. Forms a cluster with proteins L14 and L19. Methylated by PrmB.

One of the primary rRNA binding proteins, it binds directly near the 3'-end of the 23S rRNA, where it nucleates assembly of the 50S subunit. This is Large ribosomal subunit protein uL3 from Xylella fastidiosa (strain 9a5c).